The sequence spans 298 residues: Apolipoprotein E (298 aa).

The first 18 residues, 1-18, serve as a signal peptide directing secretion; sequence MKILWAALVLTLLAGCRA. 6 tandem repeats follow at residues 74–95, 96–117, 118–139, 140–161, 162–183, and 223–244. The tract at residues 74-244 is 8 X 22 AA approximate tandem repeats; it reads LLMEDTMKEL…RLEEVREQME (171 aa). M137 carries the methionine sulfoxide modification. A Phosphoserine modification is found at S141. The interval 152-162 is LDL and other lipoprotein receptors binding; the sequence is HLRKLRKRLQR. A heparin-binding site is contributed by 156-159; it reads LRKR. The interval 204–272 is lipid-binding and lipoprotein association; that stretch reads ALTSHPLRER…SWFEPMVEDL (69 aa). Heparin is bound at residue 218 to 225; the sequence is GEQVRGRL. The interval 260–272 is specificity for association with VLDL; it reads RLKSWFEPMVEDL.

This sequence belongs to the apolipoprotein A1/A4/E family. Homotetramer. May interact with ABCA1; functionally associated with ABCA1 in the biogenesis of HDLs. May interact with APP/A4 amyloid-beta peptide; the interaction is extremely stable in vitro but its physiological significance is unclear. May interact with MAPT. May interact with MAP2. In the cerebrospinal fluid, interacts with secreted SORL1. Interacts with PMEL; this allows the loading of PMEL luminal fragment on ILVs to induce fibril nucleation. In terms of processing, APOE exists as multiple glycosylated and sialylated glycoforms within cells and in plasma. The extent of glycosylation and sialylation are tissue and context specific. Glycated in plasma VLDL. Post-translationally, phosphorylated by FAM20C in the extracellular medium.

The protein localises to the secreted. It is found in the extracellular space. Its subcellular location is the extracellular matrix. The protein resides in the extracellular vesicle. It localises to the endosome. The protein localises to the multivesicular body. Its function is as follows. APOE is an apolipoprotein, a protein associating with lipid particles, that mainly functions in lipoprotein-mediated lipid transport between organs via the plasma and interstitial fluids. APOE is a core component of plasma lipoproteins and is involved in their production, conversion and clearance. Apolipoproteins are amphipathic molecules that interact both with lipids of the lipoprotein particle core and the aqueous environment of the plasma. As such, APOE associates with chylomicrons, chylomicron remnants, very low density lipoproteins (VLDL) and intermediate density lipoproteins (IDL) but shows a preferential binding to high-density lipoproteins (HDL). It also binds a wide range of cellular receptors including the LDL receptor/LDLR, the LDL receptor-related proteins LRP1, LRP2 and LRP8 and the very low-density lipoprotein receptor/VLDLR that mediate the cellular uptake of the APOE-containing lipoprotein particles. Finally, APOE also has a heparin-binding activity and binds heparan-sulfate proteoglycans on the surface of cells, a property that supports the capture and the receptor-mediated uptake of APOE-containing lipoproteins by cells. A main function of APOE is to mediate lipoprotein clearance through the uptake of chylomicrons, VLDLs, and HDLs by hepatocytes. APOE is also involved in the biosynthesis by the liver of VLDLs as well as their uptake by peripheral tissues ensuring the delivery of triglycerides and energy storage in muscle, heart and adipose tissues. By participating in the lipoprotein-mediated distribution of lipids among tissues, APOE plays a critical role in plasma and tissues lipid homeostasis. APOE is also involved in two steps of reverse cholesterol transport, the HDLs-mediated transport of cholesterol from peripheral tissues to the liver, and thereby plays an important role in cholesterol homeostasis. First, it is functionally associated with ABCA1 in the biogenesis of HDLs in tissues. Second, it is enriched in circulating HDLs and mediates their uptake by hepatocytes. APOE also plays an important role in lipid transport in the central nervous system, regulating neuron survival and sprouting. The sequence is that of Apolipoprotein E (APOE) from Hydrochoerus hydrochaeris (Capybara).